Here is a 249-residue protein sequence, read N- to C-terminus: Large ribosomal subunit protein uL1 (249 aa).

This sequence belongs to the universal ribosomal protein uL1 family. As to quaternary structure, part of the 50S ribosomal subunit.

In terms of biological role, binds directly to 23S rRNA. The L1 stalk is quite mobile in the ribosome, and is involved in E site tRNA release. Functionally, protein L1 is also a translational repressor protein, it controls the translation of the L11 operon by binding to its mRNA. This chain is Large ribosomal subunit protein uL1, found in Orientia tsutsugamushi (strain Ikeda) (Rickettsia tsutsugamushi).